A 391-amino-acid chain; its full sequence is Processive diacylglycerol beta-glucosyltransferase (391 aa).

This sequence belongs to the glycosyltransferase 28 family. UgtP subfamily.

Its subcellular location is the cell membrane. It carries out the reaction a 1,2-diacyl-3-O-(beta-D-glucopyranosyl)-sn-glycerol + UDP-alpha-D-glucose = a 1,2-diacyl-3-O-(beta-D-Glc-(1-&gt;6)-beta-D-Glc)-sn-glycerol + UDP + H(+). The catalysed reaction is a 1,2-diacyl-sn-glycerol + UDP-alpha-D-glucose = a 1,2-diacyl-3-O-(beta-D-glucopyranosyl)-sn-glycerol + UDP + H(+). It participates in glycolipid metabolism; diglucosyl-diacylglycerol biosynthesis. Its function is as follows. Processive glucosyltransferase involved in the biosynthesis of both the bilayer- and non-bilayer-forming membrane glucolipids. Is able to successively transfer two glucosyl residues to diacylglycerol (DAG), thereby catalyzing the formation of beta-monoglucosyl-DAG (3-O-(beta-D-glucopyranosyl)-1,2-diacyl-sn-glycerol) and beta-diglucosyl-DAG (3-O-(beta-D-glucopyranosyl-beta-(1-&gt;6)-D-glucopyranosyl)-1,2-diacyl-sn-glycerol). Beta-diglucosyl-DAG is the predominant glycolipid found in Bacillales and is also used as a membrane anchor for lipoteichoic acid (LTA). This chain is Processive diacylglycerol beta-glucosyltransferase, found in Staphylococcus aureus (strain MRSA252).